A 706-amino-acid polypeptide reads, in one-letter code: Translation initiation factor IF-2 (706 aa).

The interval 55-117 is disordered; it reads KEVNSDSNQE…PTMKDEKGLI (63 aa). A compositionally biased stretch (basic and acidic residues) spans 67–81; the sequence is VNTDDKLDKIDKPNK. The span at 93-108 shows a compositional bias: basic residues; the sequence is KNKKSKKKQKNKKKGP. The 168-residue stretch at 208 to 375 folds into the tr-type G domain; that stretch reads SRPPVVTVMG…MILLVSEVEE (168 aa). A G1 region spans residues 217–224; the sequence is GHVDHGKT. 217 to 224 is a GTP binding site; that stretch reads GHVDHGKT. The tract at residues 242 to 246 is G2; sequence GITQH. The tract at residues 263-266 is G3; sequence DTPG. GTP-binding positions include 263 to 267 and 317 to 320; these read DTPGH and NKID. A G4 region spans residues 317 to 320; sequence NKID. Positions 353–355 are G5; the sequence is SAI.

Belongs to the TRAFAC class translation factor GTPase superfamily. Classic translation factor GTPase family. IF-2 subfamily.

It is found in the cytoplasm. Its function is as follows. One of the essential components for the initiation of protein synthesis. Protects formylmethionyl-tRNA from spontaneous hydrolysis and promotes its binding to the 30S ribosomal subunits. Also involved in the hydrolysis of GTP during the formation of the 70S ribosomal complex. The chain is Translation initiation factor IF-2 from Alkaliphilus metalliredigens (strain QYMF).